We begin with the raw amino-acid sequence, 441 residues long: Ribulose bisphosphate carboxylase large chain (441 aa).

Lys5 carries the N6,N6,N6-trimethyllysine modification. Positions 114 and 164 each coordinate substrate. Residue Lys166 is the Proton acceptor of the active site. Lys168 provides a ligand contact to substrate. Mg(2+) is bound by residues Lys192, Asp194, and Glu195. Lys192 carries the N6-carboxylysine modification. The active-site Proton acceptor is the His285. 3 residues coordinate substrate: Arg286, His318, and Ser370.

The protein belongs to the RuBisCO large chain family. Type I subfamily. In terms of assembly, heterohexadecamer of 8 large chains and 8 small chains; disulfide-linked. The disulfide link is formed within the large subunit homodimers. It depends on Mg(2+) as a cofactor. The disulfide bond which can form in the large chain dimeric partners within the hexadecamer appears to be associated with oxidative stress and protein turnover.

It localises to the plastid. The protein localises to the chloroplast. The catalysed reaction is 2 (2R)-3-phosphoglycerate + 2 H(+) = D-ribulose 1,5-bisphosphate + CO2 + H2O. The enzyme catalyses D-ribulose 1,5-bisphosphate + O2 = 2-phosphoglycolate + (2R)-3-phosphoglycerate + 2 H(+). In terms of biological role, ruBisCO catalyzes two reactions: the carboxylation of D-ribulose 1,5-bisphosphate, the primary event in carbon dioxide fixation, as well as the oxidative fragmentation of the pentose substrate in the photorespiration process. Both reactions occur simultaneously and in competition at the same active site. This Drosera dichrosepala (Rusty sundew) protein is Ribulose bisphosphate carboxylase large chain.